A 311-amino-acid polypeptide reads, in one-letter code: Probable acetylxylan esterase A (311 aa).

The signal sequence occupies residues 1–19; that stretch reads MAPFSFILTVLLYALTCSA. The Charge relay system role is filled by Ser-153. Asn-197 and Asn-224 each carry an N-linked (GlcNAc...) asparagine glycan.

Belongs to the carbohydrate esterase 1 (CE1) family. AxeA subfamily. Monomer.

The protein localises to the secreted. The enzyme catalyses Deacetylation of xylans and xylo-oligosaccharides.. It participates in glycan degradation; xylan degradation. Functionally, acetylxylan esterase involved in the hydrolysis of xylan, a major structural heterogeneous polysaccharide found in plant biomass representing the second most abundant polysaccharide in the biosphere, after cellulose. Degrades acetylated xylans by cleaving acetyl side groups from the hetero-xylan backbone. This is Probable acetylxylan esterase A (axeA) from Aspergillus terreus (strain NIH 2624 / FGSC A1156).